The following is a 481-amino-acid chain: UDP-glycosyltransferase 72E3 (481 aa).

The Proton acceptor role is filled by His-18. His-18 lines the an anthocyanidin pocket. The active-site Charge relay is the Asp-111. UDP-alpha-D-glucose contacts are provided by Ala-346, Gln-348, His-363, Trp-366, Ser-368, and Glu-371. Residue Ala-386 participates in an anthocyanidin binding. Glu-387 and Gln-388 together coordinate UDP-alpha-D-glucose.

Belongs to the UDP-glycosyltransferase family. In terms of tissue distribution, expressed in seedlings and roots, and at lower levels in flowers and siliques.

The catalysed reaction is (E)-4-coumarate + UDP-alpha-D-glucose = 4-O-(beta-D-glucosyl)-trans-4-coumarate + UDP + H(+). The enzyme catalyses (E)-sinapyl alcohol + UDP-alpha-D-glucose = 4-O-(beta-D-glucosyl)-trans-4-sinapoyl alcohol + UDP + H(+). It catalyses the reaction (E)-coniferol + UDP-alpha-D-glucose = 4-O-(beta-D-glucosyl)-(E)-coniferol + UDP + H(+). It carries out the reaction (E)-sinapate + UDP-alpha-D-glucose = 4-O-(beta-D-glucosyl)-trans-sinapate + UDP + H(+). The catalysed reaction is (E)-coniferaldehyde + UDP-alpha-D-glucose = 4-O-(beta-D-glucosyl)-4-(E)-coniferyl aldehyde + UDP + H(+). The enzyme catalyses (E)-sinapaldehyde + UDP-alpha-D-glucose = 4-O-(beta-D-glucosyl)-4-trans-sinapoyl aldehyde + UDP + H(+). Involved in the O-glucosylation of monolignols (alcohol monomers of lignin). Glucosylates coniferyl alcohol to form coniferyl alcohol 4-O-glucoside. Glucosylates sinapyl alcohol to form sinapyl alcohol 4-O-glucoside. Possesses low activity with sinapate as substrate. The protein is UDP-glycosyltransferase 72E3 of Arabidopsis thaliana (Mouse-ear cress).